The chain runs to 185 residues: Der GTPase-activating protein YihI (185 aa).

Disordered regions lie at residues 1–74 and 145–169; these read MGRS…KKKI and EPED…SSDE. A compositionally biased stretch (basic and acidic residues) spans 23 to 33; it reads NRSESDVEGRE. Residues 34–47 are compositionally biased toward basic residues; sequence RKRVKKRKGLKSGS. A compositionally biased stretch (basic and acidic residues) spans 48 to 68; the sequence is RHSDGSEAKQRKAALARDPRL. Positions 145 to 155 are enriched in acidic residues; that stretch reads EPEDDEEEIFE.

This sequence belongs to the YihI family. In terms of assembly, interacts with Der.

Functionally, a GTPase-activating protein (GAP) that modifies Der/EngA GTPase function. May play a role in ribosome biogenesis. In Vibrio atlanticus (strain LGP32) (Vibrio splendidus (strain Mel32)), this protein is Der GTPase-activating protein YihI.